Reading from the N-terminus, the 407-residue chain is Peptidase T (407 aa).

His-82 lines the Zn(2+) pocket. Asp-84 is a catalytic residue. Zn(2+) is bound at residue Asp-143. Residue Glu-177 is the Proton acceptor of the active site. Zn(2+) contacts are provided by Glu-178, Asp-200, and His-382.

This sequence belongs to the peptidase M20B family. The cofactor is Zn(2+).

It localises to the cytoplasm. It catalyses the reaction Release of the N-terminal residue from a tripeptide.. Functionally, cleaves the N-terminal amino acid of tripeptides. In Streptococcus equi subsp. equi (strain 4047), this protein is Peptidase T.